The following is a 131-amino-acid chain: Small ribosomal subunit protein uS8 (131 aa).

This sequence belongs to the universal ribosomal protein uS8 family. As to quaternary structure, part of the 30S ribosomal subunit. Contacts proteins S5 and S12.

In terms of biological role, one of the primary rRNA binding proteins, it binds directly to 16S rRNA central domain where it helps coordinate assembly of the platform of the 30S subunit. This chain is Small ribosomal subunit protein uS8, found in Sorangium cellulosum (strain So ce56) (Polyangium cellulosum (strain So ce56)).